The following is a 534-amino-acid chain: Flavonoid-6-hydroxylase (534 aa).

A helical transmembrane segment spans residues phenylalanine 3–tryptophan 23. Position 467 (cysteine 467) interacts with heme.

This sequence belongs to the cytochrome P450 family. Requires heme as cofactor. As to expression, expressed in leaves.

Its subcellular location is the membrane. It carries out the reaction genkwanin + reduced [NADPH--hemoprotein reductase] + O2 = scutellarein 7-methyl ether + oxidized [NADPH--hemoprotein reductase] + H2O. It catalyses the reaction (2S)-sakuranetin + reduced [NADPH--hemoprotein reductase] + O2 = (2S)-7-methylcarthamidin + oxidized [NADPH--hemoprotein reductase] + H2O + H(+). The enzyme catalyses apigenin 4',7-dimethyl ether + reduced [NADPH--hemoprotein reductase] + O2 = ladanein + oxidized [NADPH--hemoprotein reductase] + H2O + H(+). The catalysed reaction is (2S)-naringenin 4',7-dimethyl ether + reduced [NADPH--hemoprotein reductase] + O2 = (2S)-carthamidin-4',7-dimethyl ether + oxidized [NADPH--hemoprotein reductase] + H2O + H(+). The protein operates within flavonoid metabolism. Hydroxylase involved in the biosynthesis of polymethoxylated flavonoids natural products such as nevadensin and salvigenin, aroma compounds which contribute to the flavor of sweet basil, and exhibit pharmacological activities such as anti-allergic, anti-oxidant, antibacterial, anti-proliferative, and anti-inflammatory effects. Catalyzes the 6-hydroxylation of 7-O-methylated precursors such as the conversion of genkwanin (GENK) to scutellarein-7-methyl ether (SCU7Me). Can also use, with a lower efficiency, apigenin-7,4'-dimethyl ether (AdM), naringenin-7-methyl ether (SAK) and naringenin-7,4'-dimethyl ether (NdM) as substrates. The protein is Flavonoid-6-hydroxylase of Ocimum basilicum (Sweet basil).